Here is a 471-residue protein sequence, read N- to C-terminus: ATP synthase subunit beta (471 aa).

Residue 156-163 participates in ATP binding; the sequence is GGAGVGKT.

Belongs to the ATPase alpha/beta chains family. In terms of assembly, F-type ATPases have 2 components, CF(1) - the catalytic core - and CF(0) - the membrane proton channel. CF(1) has five subunits: alpha(3), beta(3), gamma(1), delta(1), epsilon(1). CF(0) has three main subunits: a(1), b(2) and c(9-12). The alpha and beta chains form an alternating ring which encloses part of the gamma chain. CF(1) is attached to CF(0) by a central stalk formed by the gamma and epsilon chains, while a peripheral stalk is formed by the delta and b chains.

The protein resides in the cell inner membrane. The catalysed reaction is ATP + H2O + 4 H(+)(in) = ADP + phosphate + 5 H(+)(out). Functionally, produces ATP from ADP in the presence of a proton gradient across the membrane. The catalytic sites are hosted primarily by the beta subunits. In Nitratidesulfovibrio vulgaris (strain DSM 19637 / Miyazaki F) (Desulfovibrio vulgaris), this protein is ATP synthase subunit beta.